A 364-amino-acid chain; its full sequence is 3-isopropylmalate dehydrogenase (364 aa).

79-90 provides a ligand contact to NAD(+); sequence GPKWGTGSVRPE. Substrate contacts are provided by Arg-97, Arg-107, Arg-136, and Asp-225. Positions 225, 250, and 254 each coordinate Mg(2+). 289–300 contacts NAD(+); it reads GSAPDLPKNKVN.

This sequence belongs to the isocitrate and isopropylmalate dehydrogenases family. In terms of assembly, homodimer. The cofactor is Mg(2+). It depends on Mn(2+) as a cofactor.

The protein localises to the cytoplasm. It catalyses the reaction (2R,3S)-3-isopropylmalate + NAD(+) = 4-methyl-2-oxopentanoate + CO2 + NADH. The protein operates within amino-acid biosynthesis; L-leucine biosynthesis; L-leucine from 3-methyl-2-oxobutanoate: step 3/4. Its function is as follows. Catalyzes the oxidation of 3-carboxy-2-hydroxy-4-methylpentanoate (3-isopropylmalate) to 3-carboxy-4-methyl-2-oxopentanoate. The product decarboxylates to 4-methyl-2 oxopentanoate. The protein is 3-isopropylmalate dehydrogenase (LEU2) of Saccharomyces cerevisiae (strain ATCC 204508 / S288c) (Baker's yeast).